The sequence spans 357 residues: Geranylgeranyl pyrophosphate synthase 11, chloroplastic (357 aa).

Residues Met-1–Ser-37 constitute a chloroplast transit peptide. Lys-103, Arg-106, and His-135 together coordinate isopentenyl diphosphate. Mg(2+) contacts are provided by Asp-142 and Asp-148. Arg-153 contacts dimethylallyl diphosphate. Residue Arg-154 participates in isopentenyl diphosphate binding. Lys-242, Thr-243, Gln-280, Lys-297, and Lys-307 together coordinate dimethylallyl diphosphate.

It belongs to the FPP/GGPP synthase family. Monomer. It depends on Mg(2+) as a cofactor.

The protein localises to the plastid. The protein resides in the chloroplast. The enzyme catalyses isopentenyl diphosphate + dimethylallyl diphosphate = (2E)-geranyl diphosphate + diphosphate. It carries out the reaction isopentenyl diphosphate + (2E)-geranyl diphosphate = (2E,6E)-farnesyl diphosphate + diphosphate. The catalysed reaction is isopentenyl diphosphate + (2E,6E)-farnesyl diphosphate = (2E,6E,10E)-geranylgeranyl diphosphate + diphosphate. The protein operates within isoprenoid biosynthesis; farnesyl diphosphate biosynthesis; farnesyl diphosphate from geranyl diphosphate and isopentenyl diphosphate: step 1/1. It functions in the pathway isoprenoid biosynthesis; geranyl diphosphate biosynthesis; geranyl diphosphate from dimethylallyl diphosphate and isopentenyl diphosphate: step 1/1. It participates in isoprenoid biosynthesis; geranylgeranyl diphosphate biosynthesis; geranylgeranyl diphosphate from farnesyl diphosphate and isopentenyl diphosphate: step 1/1. In terms of biological role, catalyzes the trans-addition of the three molecules of IPP onto DMAPP to form geranylgeranyl pyrophosphate. This is Geranylgeranyl pyrophosphate synthase 11, chloroplastic from Arabidopsis thaliana (Mouse-ear cress).